Here is a 146-residue protein sequence, read N- to C-terminus: Snaclec 1 (146 aa).

The signal sequence occupies residues 1–23 (MGRFIFISFGLLVVFLSLSGTEA). Intrachain disulfides connect C25-C36, C53-C142, and C119-C134. In terms of domain architecture, C-type lectin spans 32-143 (YEGHCYRVFD…CRNYGHFVCK (112 aa)).

The protein belongs to the snaclec family. As to quaternary structure, heterodimer; disulfide-linked. In terms of tissue distribution, expressed by the venom gland.

The protein resides in the secreted. In terms of biological role, interferes with one step of hemostasis (modulation of platelet aggregation, or coagulation cascade, for example). The sequence is that of Snaclec 1 from Bitis arietans (African puff adder).